A 257-amino-acid chain; its full sequence is Transmembrane protein 101 (257 aa).

A run of 8 helical transmembrane segments spans residues 21–40, 52–72, 77–97, 110–130, 139–159, 182–202, 206–226, and 233–253; these read VLLT…LYAE, VPYL…MSFG, WFAL…YIGG, YSRT…AGEL, SLQS…AYSL, LFFV…YVTL, ILAV…AYWH, and FWNQ…AVIL.

It localises to the membrane. Functionally, may activate NF-kappa-B signaling pathways. This Pongo abelii (Sumatran orangutan) protein is Transmembrane protein 101 (TMEM101).